The sequence spans 237 residues: Uridylate kinase (237 aa).

Position 11–14 (11–14 (KLSG)) interacts with ATP. Residue Gly53 participates in UMP binding. ATP is bound by residues Gly54 and Arg58. UMP-binding positions include Asp73 and 134 to 141 (TGNPFFTT). 3 residues coordinate ATP: Thr161, Tyr167, and Asp170.

It belongs to the UMP kinase family. As to quaternary structure, homohexamer.

It is found in the cytoplasm. The catalysed reaction is UMP + ATP = UDP + ADP. It functions in the pathway pyrimidine metabolism; CTP biosynthesis via de novo pathway; UDP from UMP (UMPK route): step 1/1. Its activity is regulated as follows. Inhibited by UTP. In terms of biological role, catalyzes the reversible phosphorylation of UMP to UDP. This chain is Uridylate kinase, found in Nitrosomonas eutropha (strain DSM 101675 / C91 / Nm57).